The sequence spans 157 residues: Transcriptional repressor NrdR (157 aa).

The disordered stretch occupies residues 1–24 (MRCPKCGGNKSSVVDSRQAEDGNT). A zinc finger spans residues 3–34 (CPKCGGNKSSVVDSRQAEDGNTIRRRRECEEC). The 91-residue stretch at 49-139 (LVVVKKDGTR…VYRSFKDVGE (91 aa)) folds into the ATP-cone domain.

This sequence belongs to the NrdR family. Requires Zn(2+) as cofactor.

Functionally, negatively regulates transcription of bacterial ribonucleotide reductase nrd genes and operons by binding to NrdR-boxes. The protein is Transcriptional repressor NrdR of Streptococcus sanguinis (strain SK36).